The following is a 328-amino-acid chain: Tetraacyldisaccharide 4'-kinase (328 aa).

59-66 (TAGGNGKT) contributes to the ATP binding site.

This sequence belongs to the LpxK family.

The catalysed reaction is a lipid A disaccharide + ATP = a lipid IVA + ADP + H(+). It participates in glycolipid biosynthesis; lipid IV(A) biosynthesis; lipid IV(A) from (3R)-3-hydroxytetradecanoyl-[acyl-carrier-protein] and UDP-N-acetyl-alpha-D-glucosamine: step 6/6. In terms of biological role, transfers the gamma-phosphate of ATP to the 4'-position of a tetraacyldisaccharide 1-phosphate intermediate (termed DS-1-P) to form tetraacyldisaccharide 1,4'-bis-phosphate (lipid IVA). In Aliivibrio fischeri (strain ATCC 700601 / ES114) (Vibrio fischeri), this protein is Tetraacyldisaccharide 4'-kinase.